Reading from the N-terminus, the 180-residue chain is ADP-ribosylation factor 4 (180 aa).

Residue Gly2 is the site of N-myristoyl glycine attachment. Residues 24–31 (GLDAAGKT), 67–71 (DVGGQ), and 126–129 (NKQD) contribute to the GTP site. Phosphoserine is present on Ser147.

The protein belongs to the small GTPase superfamily. Arf family. Forms a complex containing RAB11A, ASAP1, RAB3IP, RAP11FIP3 and ARF4; the complex promotes preciliary trafficking; the complex binds to RHO in photoreceptor cells and promotes RHO ciliary transport.

It is found in the golgi apparatus. It localises to the membrane. In terms of biological role, GTP-binding protein that functions as an allosteric activator of the cholera toxin catalytic subunit, an ADP-ribosyltransferase. Involved in protein trafficking; may modulate vesicle budding and uncoating within the Golgi apparatus. Part of the ciliary targeting complex containing Rab11, ASAP1, Rabin8/RAB3IP, RAB11FIP3 and ARF4, which direct preciliary vesicle trafficking to mother centriole and ciliogenesis initiation. The chain is ADP-ribosylation factor 4 (ARF4) from Homo sapiens (Human).